Reading from the N-terminus, the 269-residue chain is Hydroxyethylthiazole kinase (269 aa).

Substrate is bound at residue Met45. Arg121 and Thr167 together coordinate ATP. Gly194 serves as a coordination point for substrate.

The protein belongs to the Thz kinase family. Mg(2+) is required as a cofactor.

The catalysed reaction is 5-(2-hydroxyethyl)-4-methylthiazole + ATP = 4-methyl-5-(2-phosphooxyethyl)-thiazole + ADP + H(+). It functions in the pathway cofactor biosynthesis; thiamine diphosphate biosynthesis; 4-methyl-5-(2-phosphoethyl)-thiazole from 5-(2-hydroxyethyl)-4-methylthiazole: step 1/1. In terms of biological role, catalyzes the phosphorylation of the hydroxyl group of 4-methyl-5-beta-hydroxyethylthiazole (THZ). The chain is Hydroxyethylthiazole kinase from Bacillus licheniformis (strain ATCC 14580 / DSM 13 / JCM 2505 / CCUG 7422 / NBRC 12200 / NCIMB 9375 / NCTC 10341 / NRRL NRS-1264 / Gibson 46).